The chain runs to 3013 residues: Protein furry homolog-like (3013 aa).

Residue Ser-2 is modified to N-acetylserine. Residues 90–109 (DESYEYRPRSSTKSKGDEQQ) are disordered. At Ser-844 the chain carries Phosphoserine. Disordered regions lie at residues 878 to 897 (SSST…LAST) and 1476 to 1498 (VTSG…PDNK). Residues 1476 to 1486 (VTSGTTSSSNT) show a composition bias toward low complexity. Residues Ser-1914, Ser-1935, Ser-1941, Ser-1945, and Ser-1957 each carry the phosphoserine modification. Thr-1959 is subject to Phosphothreonine. A phosphoserine mark is found at Ser-1978, Ser-2272, and Ser-2454. Residues 2459-2492 (DKGDTPSLQEYQCSSSTPSLNLTNQEDTDESSEE) are disordered. Residues 2464–2483 (PSLQEYQCSSSTPSLNLTNQ) show a composition bias toward polar residues. Phosphoserine is present on Ser-2499. 2 disordered regions span residues 2508–2567 (LNSD…DTTS) and 2636–2660 (EEEA…EVQT). 2 stretches are compositionally biased toward polar residues: residues 2528–2539 (SEDSTGSITTEE) and 2555–2567 (DNAN…DTTS).

The protein belongs to the furry protein family. In terms of tissue distribution, widely expressed with higher expression in colon, placenta, brain and cells of lymphoid origin.

Plays a key role in maintaining the integrity of polarized cell extensions during morphogenesis, regulates the actin cytoskeleton and plays a key role in patterning sensory neuron dendritic fields by promoting avoidance between homologous dendrites as well as by limiting dendritic branching. May function as a transcriptional activator. The chain is Protein furry homolog-like (FRYL) from Homo sapiens (Human).